The sequence spans 273 residues: Small ribosomal subunit protein eS1 (273 aa).

It belongs to the eukaryotic ribosomal protein eS1 family. Component of the small ribosomal subunit. Mature ribosomes consist of a small (40S) and a large (60S) subunit. The 40S subunit contains about 33 different proteins and 1 molecule of RNA (18S). The 60S subunit contains about 49 different proteins and 3 molecules of RNA (25S, 5.8S and 5S).

The protein resides in the cytoplasm. The sequence is that of Small ribosomal subunit protein eS1 (rps3a) from Dictyostelium discoideum (Social amoeba).